We begin with the raw amino-acid sequence, 78 residues long: Large ribosomal subunit protein bL28 (78 aa).

The disordered stretch occupies residues 1 to 20 (MSRVCQVTGKRPAVGNNRSH).

It belongs to the bacterial ribosomal protein bL28 family.

The protein is Large ribosomal subunit protein bL28 of Actinobacillus pleuropneumoniae serotype 7 (strain AP76).